Reading from the N-terminus, the 1370-residue chain is DNA-directed RNA polymerase subunit beta (1370 aa).

Belongs to the RNA polymerase beta chain family. The RNAP catalytic core consists of 2 alpha, 1 beta, 1 beta' and 1 omega subunit. When a sigma factor is associated with the core the holoenzyme is formed, which can initiate transcription.

The enzyme catalyses RNA(n) + a ribonucleoside 5'-triphosphate = RNA(n+1) + diphosphate. DNA-dependent RNA polymerase catalyzes the transcription of DNA into RNA using the four ribonucleoside triphosphates as substrates. This chain is DNA-directed RNA polymerase subunit beta, found in Geotalea daltonii (strain DSM 22248 / JCM 15807 / FRC-32) (Geobacter daltonii).